The primary structure comprises 158 residues: Anaerobic ribonucleoside-triphosphate reductase-activating protein (158 aa).

C26, C30, and C33 together coordinate [4Fe-4S] cluster. S-adenosyl-L-methionine-binding positions include 32-34 (GCY) and G74.

This sequence belongs to the organic radical-activating enzymes family. In terms of assembly, forms a tetramer composed of two NrdD and two NrdG subunits. The cofactor is [4Fe-4S] cluster.

It is found in the cytoplasm. It catalyses the reaction glycyl-[protein] + reduced [flavodoxin] + S-adenosyl-L-methionine = glycin-2-yl radical-[protein] + semiquinone [flavodoxin] + 5'-deoxyadenosine + L-methionine + H(+). Functionally, activation of anaerobic ribonucleoside-triphosphate reductase under anaerobic conditions by generation of an organic free radical, using S-adenosylmethionine and reduced flavodoxin as cosubstrates to produce 5'-deoxy-adenosine. This chain is Anaerobic ribonucleoside-triphosphate reductase-activating protein (nrdG), found in Pasteurella multocida (strain Pm70).